Consider the following 920-residue polypeptide: Bifunctional aspartokinase/homoserine dehydrogenase 1, chloroplastic (920 aa).

A disordered region spans residues 1–21; it reads MRSLTVASRHPGAAFSTRRRP. The transit peptide at 1-92 directs the protein to the chloroplast; it reads MRSLTVASRH…EAIADLPKGD (92 aa). Residues 93 to 341 form an aspartokinase region; sequence MWSVHKFGGT…VSEAVILSTL (249 aa). Positions 342 to 566 are interface; the sequence is SYQEAWEMSY…LSKTTLAVGI (225 aa). 2 ACT domains span residues 416–491 and 497–574; these read VEGT…VIHN and TVGL…LIGR. A homoserine dehydrogenase region spans residues 567 to 920; sequence IGPGLIGRTL…RLSSYLGAPS (354 aa). 2 residues coordinate NAD(+): isoleucine 572 and alanine 601. Isoleucine 572 contacts NADP(+). Isoleucine 572 contributes to the NADPH binding site. Positions 604, 653, and 677 each coordinate NADP(+). Position 653 (threonine 653) interacts with NAD(+). NADPH contacts are provided by threonine 653 and lysine 677. Residues glutamate 704, valine 707, alanine 709, and leucine 711 each contribute to the Na(+) site. Positions 762 and 765 each coordinate NADP(+). Positions 765 and 776 each coordinate L-homoserine. Lysine 780 functions as the Proton donor in the catalytic mechanism. Glycine 897 contacts NAD(+). Glycine 897 is a binding site for NADP(+). Glycine 897 contributes to the NADPH binding site.

In the N-terminal section; belongs to the aspartokinase family. This sequence in the C-terminal section; belongs to the homoserine dehydrogenase family. Homo- or heterodimer. A metal cation serves as cofactor.

It localises to the plastid. Its subcellular location is the chloroplast. The enzyme catalyses L-homoserine + NADP(+) = L-aspartate 4-semialdehyde + NADPH + H(+). It carries out the reaction L-homoserine + NAD(+) = L-aspartate 4-semialdehyde + NADH + H(+). It catalyses the reaction L-aspartate + ATP = 4-phospho-L-aspartate + ADP. It participates in amino-acid biosynthesis; L-lysine biosynthesis via DAP pathway; (S)-tetrahydrodipicolinate from L-aspartate: step 1/4. It functions in the pathway amino-acid biosynthesis; L-methionine biosynthesis via de novo pathway; L-homoserine from L-aspartate: step 1/3. The protein operates within amino-acid biosynthesis; L-methionine biosynthesis via de novo pathway; L-homoserine from L-aspartate: step 3/3. Its pathway is amino-acid biosynthesis; L-threonine biosynthesis; L-threonine from L-aspartate: step 1/5. It participates in amino-acid biosynthesis; L-threonine biosynthesis; L-threonine from L-aspartate: step 3/5. In terms of biological role, bifunctional aspartate kinase and homoserine dehydrogenase that catalyzes the first and the third steps toward the synthesis of lysine, methionine and threonine from aspartate. This Zea mays (Maize) protein is Bifunctional aspartokinase/homoserine dehydrogenase 1, chloroplastic (AKHSDH1).